The sequence spans 674 residues: Protein asunder (674 aa).

Positions 516–538 form a coiled coil; that stretch reads HKAKDQYRLLYRELEQLIQLNAS. Positions 601–607 match the Nuclear localization signal (NLS) motif; the sequence is LKASKRR.

This sequence belongs to the Integrator subunit 13 family. Belongs to the multiprotein complex Integrator, at least composed of IntS1, IntS2, IntS3, IntS4, omd/IntS5, IntS6, defl/IntS7, IntS8, IntS9, IntS10, IntS11, IntS12, asun/IntS13, IntS14 and IntS15. The core complex associates with protein phosphatase 2A subunits mts/PP2A and Pp2A-29B, to form the Integrator-PP2A (INTAC) complex. In terms of processing, phosphorylated.

The protein resides in the nucleus. It localises to the cytoplasm. Its subcellular location is the perinuclear region. In terms of biological role, component of the integrator complex, a multiprotein complex that terminates RNA polymerase II (Pol II) transcription in the promoter-proximal region of genes. The integrator complex provides a quality checkpoint during transcription elongation by driving premature transcription termination of transcripts that are unfavorably configured for transcriptional elongation: the complex terminates transcription by (1) catalyzing dephosphorylation of the C-terminal domain (CTD) of Pol II subunit Polr2A/Rbp1 and Spt5, and (2) degrading the exiting nascent RNA transcript via endonuclease activity. The integrator complex is also involved in the 3'-end processing of the U7 snRNA, and also the spliceosomal snRNAs U1, U2, U4 and U5. The polypeptide is Protein asunder (asun) (Drosophila persimilis (Fruit fly)).